Consider the following 184-residue polypeptide: UPF0301 protein ABSDF3201 (184 aa).

This sequence belongs to the UPF0301 (AlgH) family.

The chain is UPF0301 protein ABSDF3201 from Acinetobacter baumannii (strain SDF).